The primary structure comprises 619 residues: MSGARRCGDRRSERSSVVGDNRNGYVETDPTGRYGRLSEVLGKGAMKTVYRGFDELRGVEVAWNQATISDVLRTPDALHRMYAEVSLLADLRHDAIIAFHASWVHPSRRTFNFITELFSSGTLRSYRLRYPRVSRRAVAAWARAILRGLAYLHSRGVIHRDLKCDNIFVNGHLGQVKIGDLGLAAVLRGCTSARSVIGTPEFMAPEMYDECYGVGVDVYSFGMCMLEMLTNEYPYSECDNPAQIYKKVTAGKLPDAFYLLTDADARRFIGRCLVDAAHRPSAEELLLDPFLSPPQNHDDHNTIAHATAPPPPLPLACSNSSEEQEEEEAPAAKTTGMAITGKLNKEHDTIFLKVQIGGGGNVRNIYFPFDVANDTAMEVATEMVKELDIADREPTEIAAMIEQEIVRLVPGYKQHEYSYADDDDDDDVNGQPNPFYYLSSSPTSSQGSLCGVGPTSSEGFPGPHGKVDWSRDYCYYPPSSVSVSDDDDSSTSSLSAAVSAISLQQQHCSASSSRLGPASASASEDGGGHAGRPRQREGEEERRRRRMSRNRSMVDMRSQLLHRTLVEELNKRLFFNTVGAVHDIGFRDPTTYGSSSSSSSSQHRRRSSSKVDHKHHYMF.

Over residues methionine 1–arginine 14 the composition is skewed to basic and acidic residues. Residues methionine 1 to proline 30 form a disordered region. In terms of domain architecture, Protein kinase spans glycine 35–leucine 291. Residues threonine 115–phenylalanine 118 and lysine 163 each bind ATP. The active-site Proton acceptor is aspartate 180. Disordered stretches follow at residues proline 293–threonine 335, tyrosine 419–histidine 464, cysteine 508–aspartate 555, and glycine 585–phenylalanine 619. The segment covering tyrosine 419–valine 428 has biased composition (acidic residues). The span at serine 439–serine 448 shows a compositional bias: low complexity. Basic residues predominate over residues glutamine 602–phenylalanine 619.

Belongs to the protein kinase superfamily. Ser/Thr protein kinase family. WNK subfamily.

It catalyses the reaction L-seryl-[protein] + ATP = O-phospho-L-seryl-[protein] + ADP + H(+). The catalysed reaction is L-threonyl-[protein] + ATP = O-phospho-L-threonyl-[protein] + ADP + H(+). This Oryza sativa subsp. japonica (Rice) protein is Probable serine/threonine-protein kinase WNK8 (WNK8).